A 220-amino-acid chain; its full sequence is Protein myomaker (220 aa).

M1 is a topological domain (extracellular). Residues 2 to 22 (GAFIAKMLLPTISSLVFVPAA) traverse the membrane as a helical segment. At 23-37 (SVAAKRGFHMEAMVY) the chain is on the cytoplasmic side. A helical membrane pass occupies residues 38 to 58 (FFTMFFTAIYHACDGPGLSIL). Over 59–64 (CFMKYD) the chain is Extracellular. Residues 65–85 (ILEYFSVYGTAISMWVTLLAL) form a helical membrane-spanning segment. At 86 to 93 (GDFDEPKR) the chain is on the cytoplasmic side. The chain crosses the membrane as a helical span at residues 94–110 (SSLTMFGVLTAAVRIYQ). Residues 111-112 (DR) lie on the Extracellular side of the membrane. A helical transmembrane segment spans residues 113–133 (LGYGIYSGPIGTAVFMITVKW). Over 134-153 (LQKMKEKKGLYPDKSVYTQQ) the chain is Cytoplasmic. The helical transmembrane segment at 154–174 (VGPGCCFGALALMLRFYFEEW) threads the bilayer. Position 175 (D175) is a topological domain, extracellular. A helical membrane pass occupies residues 176 to 196 (YAYVHSFYHVSLAMSFILLLP). Topologically, residues 197–220 (KKNRYAGTGRNAAKLNCYTLCCCV) are cytoplasmic.

This sequence belongs to the TMEM8 family.

It localises to the cell membrane. In terms of biological role, myoblast-specific protein that mediates myoblast fusion, an essential step for the formation of multi-nucleated muscle fibers. Actively participates in the membrane fusion reaction by mediating the mixing of cell membrane lipids (hemifusion) upstream of mymx. In Danio rerio (Zebrafish), this protein is Protein myomaker.